The chain runs to 169 residues: Nicotinamide-nucleotide adenylyltransferase (169 aa).

This sequence belongs to the archaeal NMN adenylyltransferase family.

Its subcellular location is the cytoplasm. The catalysed reaction is beta-nicotinamide D-ribonucleotide + ATP + H(+) = diphosphate + NAD(+). It functions in the pathway cofactor biosynthesis; NAD(+) biosynthesis; NAD(+) from nicotinamide D-ribonucleotide: step 1/1. In Picrophilus torridus (strain ATCC 700027 / DSM 9790 / JCM 10055 / NBRC 100828 / KAW 2/3), this protein is Nicotinamide-nucleotide adenylyltransferase.